The sequence spans 250 residues: Protein orai-2 (250 aa).

The next 4 membrane-spanning stretches (helical) occupy residues 66–83 (TSALLSGFAMVAMVEVQL), 94–114 (LIAFSACTTVLVAVHLFALLI), 148–168 (LAWGFSTVLGILLFLAEVVLL), and 192–212 (AALVSTIIMVPVGLIFVVFTI).

The protein belongs to the Orai family. As to quaternary structure, oligomerizes in homomeric and heteromeric ORAI complexes. Native CRAC channels most likely consist of hexameric ORAI heteromers, implying that diverse ORAI1, ORAI2 and ORAI3 subunit combinations with distinct biophysical properties can operate in a cell-type specific way. Interacts with STIM1; this regulates channel activity. Interacts with CRACR2A/EFCAB4B.

The protein resides in the cell membrane. The enzyme catalyses Ca(2+)(in) = Ca(2+)(out). With respect to regulation, CRAC channels are regulated by fast Ca(2+)-dependent inactivation (FCDI), a mechanism that limits Ca(2+) influx and cell toxicity. ORAI2 channels display prominent FCDI. Inhibited by lanthanides such as Gd(3+) ions. Its function is as follows. Pore-forming subunit of inward rectifying Ca(2+) release-activated Ca(2+) (CRAC) channels. Assembles with ORAI1 and ORAI3 to form hexameric CRAC channels that mediate Ca(2+) influx upon depletion of endoplasmic reticulum Ca(2+) store and channel activation by Ca(2+) sensor STIM1, a process known as store-operated Ca(2+) entry (SOCE). Various pore subunit combinations may account for distinct CRAC channel spatiotemporal and cell-type specific dynamics. ORAI1 mainly contributes to the generation of Ca(2+) plateaus involved in sustained Ca(2+) entry and is dispensable for cytosolic Ca(2+) oscillations, whereas ORAI2 and ORAI3 generate oscillatory patterns. CRAC channels assemble in Ca(2+) signaling microdomains where Ca(2+) influx is coupled to calmodulin and calcineurin signaling and activation of NFAT transcription factors recruited to ORAI1 via AKAP5. CRAC channels are the main pathway for Ca(2+) influx in T cells and promote the immune response to pathogens by activating NFAT-dependent cytokine and chemokine transcription. This Mus musculus (Mouse) protein is Protein orai-2 (Orai2).